The sequence spans 159 residues: D-aminoacyl-tRNA deacylase (159 aa).

The Gly-cisPro motif, important for rejection of L-amino acids signature appears at 146–147; it reads GP.

Belongs to the DTD family. As to quaternary structure, homodimer.

It is found in the cytoplasm. The enzyme catalyses glycyl-tRNA(Ala) + H2O = tRNA(Ala) + glycine + H(+). It catalyses the reaction a D-aminoacyl-tRNA + H2O = a tRNA + a D-alpha-amino acid + H(+). In terms of biological role, an aminoacyl-tRNA editing enzyme that deacylates mischarged D-aminoacyl-tRNAs. Also deacylates mischarged glycyl-tRNA(Ala), protecting cells against glycine mischarging by AlaRS. Acts via tRNA-based rather than protein-based catalysis; rejects L-amino acids rather than detecting D-amino acids in the active site. By recycling D-aminoacyl-tRNA to D-amino acids and free tRNA molecules, this enzyme counteracts the toxicity associated with the formation of D-aminoacyl-tRNA entities in vivo and helps enforce protein L-homochirality. The protein is D-aminoacyl-tRNA deacylase of Bifidobacterium animalis subsp. lactis (strain AD011).